Reading from the N-terminus, the 166-residue chain is Cytochrome c-type biogenesis protein CcmE (166 aa).

Residues 1–7 (MTRKQKR) are Cytoplasmic-facing. Residues 8–28 (LALIASGAVVVSLAVGLVMFA) form a helical; Signal-anchor for type II membrane protein membrane-spanning segment. The Periplasmic portion of the chain corresponds to 29–166 (LRDNIVFFYS…QTAPQGAQAY (138 aa)). Positions 122 and 126 each coordinate heme. The disordered stretch occupies residues 139–166 (GVWQEEGKSEGKPSAIPAQTAPQGAQAY).

The protein belongs to the CcmE/CycJ family.

It localises to the cell inner membrane. Its function is as follows. Heme chaperone required for the biogenesis of c-type cytochromes. Transiently binds heme delivered by CcmC and transfers the heme to apo-cytochromes in a process facilitated by CcmF and CcmH. In Methylocella silvestris (strain DSM 15510 / CIP 108128 / LMG 27833 / NCIMB 13906 / BL2), this protein is Cytochrome c-type biogenesis protein CcmE.